Reading from the N-terminus, the 451-residue chain is MLGIVVSHADAASMHIGEHLRSLRDWETSVDETRPDDEGGGTVYQIDSVELREFEALHLDIENVAAAFDDPDLLVFASKHAGETDELLTAHHTGNFGVAEHGGEDGQFARACPGAHKAVVSALQRHAPPDYEVGMECTHHGPTAVGVPSMFVEVGSAEPQWEDPDAAEAAARAILDLADEPADRPRENGTRRHLLGVGGGHYAPRFERVVRETDWAVGHIAANWSLDALAEWADSDEERDTVLDRAFRASAADYALMEGDRPDLTAAIESLGYRVVSETFVQEATGVNLGLVEALEDAIRPVDEGLRFGALAPGYDGEWTVLDLPKELISDVRGVDSEALRDTIERQSIAYATEQNGTVVTGPIVCPATTELEAVVDPLVEILKQRFDSVERNADELVARETAFDPDLARTADIPEGPKFGKLASGESVEIDGEEIDPERFQRERIRRYTL.

The tract at residues 410–437 (RTADIPEGPKFGKLASGESVEIDGEEID) is disordered.

This sequence belongs to the DtdA deacylase family. In terms of assembly, monomer. The cofactor is Zn(2+).

The catalysed reaction is a D-aminoacyl-tRNA + H2O = a tRNA + a D-alpha-amino acid + H(+). It carries out the reaction glycyl-tRNA(Ala) + H2O = tRNA(Ala) + glycine + H(+). In terms of biological role, D-aminoacyl-tRNA deacylase with broad substrate specificity. By recycling D-aminoacyl-tRNA to D-amino acids and free tRNA molecules, this enzyme counteracts the toxicity associated with the formation of D-aminoacyl-tRNA entities in vivo. The polypeptide is D-aminoacyl-tRNA deacylase (Haloarcula marismortui (strain ATCC 43049 / DSM 3752 / JCM 8966 / VKM B-1809) (Halobacterium marismortui)).